The sequence spans 400 residues: Argininosuccinate synthase (400 aa).

9–17 (AYSGGLDTS) contributes to the ATP binding site. Tyr-87 contributes to the L-citrulline binding site. Gly-117 lines the ATP pocket. L-aspartate is bound by residues Thr-119, Asn-123, and Asp-124. Residue Asn-123 participates in L-citrulline binding. Residues Arg-127, Ser-176, Ser-185, Glu-261, and Tyr-273 each coordinate L-citrulline.

It belongs to the argininosuccinate synthase family. Type 1 subfamily. In terms of assembly, homotetramer.

The protein resides in the cytoplasm. It catalyses the reaction L-citrulline + L-aspartate + ATP = 2-(N(omega)-L-arginino)succinate + AMP + diphosphate + H(+). The protein operates within amino-acid biosynthesis; L-arginine biosynthesis; L-arginine from L-ornithine and carbamoyl phosphate: step 2/3. The protein is Argininosuccinate synthase of Chlorobium limicola (strain DSM 245 / NBRC 103803 / 6330).